The following is a 521-amino-acid chain: Beta-glucosidase 11 (521 aa).

A signal peptide spans 1 to 23 (MKLLSNSLMFLPLLALALTAVSS). A beta-D-glucoside-binding positions include Gln-45, His-144, and 189 to 190 (NE). Glu-190 acts as the Proton donor in catalysis. Residues Cys-209 and Cys-217 are joined by a disulfide bond. N-linked (GlcNAc...) asparagine glycosylation is found at Asn-216 and Asn-221. An a beta-D-glucoside-binding site is contributed by Tyr-356. Residues Asn-364 and Asn-388 are each glycosylated (N-linked (GlcNAc...) asparagine). Positions 422, 466, and 482 each coordinate a beta-D-glucoside. Residue Glu-422 is the Nucleophile of the active site.

It belongs to the glycosyl hydrolase 1 family.

The catalysed reaction is Hydrolysis of terminal, non-reducing beta-D-glucosyl residues with release of beta-D-glucose.. The sequence is that of Beta-glucosidase 11 from Arabidopsis thaliana (Mouse-ear cress).